Here is a 376-residue protein sequence, read N- to C-terminus: Cyclin-dependent kinase 9 (376 aa).

The region spanning 19–319 (YERLAKIGQG…SDDALNHDFF (301 aa)) is the Protein kinase domain. ATP is bound by residues 25 to 33 (IGQGTFGEV) and K48. D153 functions as the Proton acceptor in the catalytic mechanism. Positions 345 to 376 (PPRRRGGHMPQQPANQARNPAATNQSEFDRVF) are disordered. A compositionally biased stretch (low complexity) spans 354-369 (PQQPANQARNPAATNQ).

The protein belongs to the protein kinase superfamily. CMGC Ser/Thr protein kinase family. CDC2/CDKX subfamily. In terms of assembly, associates with cyclin-T to form P-TEFb.

It is found in the nucleus. It catalyses the reaction L-seryl-[protein] + ATP = O-phospho-L-seryl-[protein] + ADP + H(+). The catalysed reaction is L-threonyl-[protein] + ATP = O-phospho-L-threonyl-[protein] + ADP + H(+). The enzyme catalyses [DNA-directed RNA polymerase] + ATP = phospho-[DNA-directed RNA polymerase] + ADP + H(+). In terms of biological role, member of the cyclin-dependent kinase pair (CDK9/cyclin-T) complex, also called positive transcription elongation factor B (P-TEFb), which is proposed to facilitate the transition from abortive to production elongation by phosphorylating the CTD (C-terminal domain) of the large subunit of RNA polymerase II (RNAP II) and SUPT5H. This is Cyclin-dependent kinase 9 (cdk9) from Xenopus tropicalis (Western clawed frog).